The chain runs to 568 residues: Estrogen receptor beta (568 aa).

A modulating region spans residues 1 to 177; it reads MHQQSPVDDV…SLRGKADMHY (177 aa). 2 NR C4-type zinc fingers span residues 178 to 198 and 214 to 238; these read CAVCSDYASGYHYGVWSCEGC and CPATNQCTIDKNRRKSCQACRLRKC. A DNA-binding region (nuclear receptor) is located at residues 178-243; it reads CAVCSDYASG…RLRKCYEVGM (66 aa). One can recognise an NR LBD domain in the interval 300–536; that stretch reads TPEELIARIM…DLLLEMLDAH (237 aa).

It belongs to the nuclear hormone receptor family. NR3 subfamily. In terms of assembly, binds DNA as a homodimer. Can form a heterodimer with ER-alpha.

The protein resides in the nucleus. In terms of biological role, binds estrogens with an affinity similar to that of ER-alpha, and activates expression of reporter genes containing estrogen response elements (ERE) in an estrogen-dependent manner. The chain is Estrogen receptor beta (esr2) from Oncorhynchus mykiss (Rainbow trout).